The chain runs to 130 residues: MAKKSVTKKKNVKKNIARGIVCISASFNNTNVTITDEMGNVLCWATAGGLGFKGSKKSTPYAAQQAVESAMEKAKEHGIKEVGIKVQGPGSGRETAVKSVGAVEGIKVLWLKDITPLPHNGCRPPKRRRV.

Belongs to the universal ribosomal protein uS11 family. Part of the 30S ribosomal subunit. Interacts with proteins S7 and S18. Binds to IF-3.

Functionally, located on the platform of the 30S subunit, it bridges several disparate RNA helices of the 16S rRNA. Forms part of the Shine-Dalgarno cleft in the 70S ribosome. In Helicobacter hepaticus (strain ATCC 51449 / 3B1), this protein is Small ribosomal subunit protein uS11.